The following is a 465-amino-acid chain: Crh-like protein ARB_05253 (465 aa).

Residues 1–21 (MKLSLAAALLGALAVSAQTST) form the signal peptide. Residues 22-223 (ECNPLKQKCP…WAGGETDFSK (202 aa)) enclose the GH16 domain. C23 and C30 form a disulfide bridge. E114 serves as the catalytic Nucleophile. E118 functions as the Proton donor in the catalytic mechanism. Chitin is bound by residues E118, W200, and T211. 2 disordered regions span residues 261 to 325 (GQVN…STMT) and 339 to 442 (TGTG…PGST). N-linked (GlcNAc...) asparagine glycosylation occurs at N264. The span at 277–287 (SSTLPSSPSTS) shows a compositional bias: low complexity. Polar residues predominate over residues 304-325 (QAPNTGSSPSNTLTNGPSSTMT). Low complexity-rich tracts occupy residues 339–348 (TGTGGVVTPT), 361–376 (TSRS…SASS), and 383–397 (MTTS…TGTG). Residue S441 is the site of GPI-anchor amidated serine attachment. The propeptide at 442 to 465 (TGAIHSVSNALLLSFCAIAAWALV) is removed in mature form.

The protein belongs to the glycosyl hydrolase 16 family. CRH1 subfamily. In terms of processing, the GPI-anchor is attached to the protein in the endoplasmic reticulum and serves to target the protein to the cell surface. There, the glucosamine-inositol phospholipid moiety is cleaved off and the GPI-modified mannoprotein is covalently attached via its lipidless GPI glycan remnant to the 1,6-beta-glucan of the outer cell wall layer.

It localises to the secreted. The protein localises to the cell wall. The protein resides in the membrane. It catalyses the reaction Random endo-hydrolysis of N-acetyl-beta-D-glucosaminide (1-&gt;4)-beta-linkages in chitin and chitodextrins.. Functionally, dual chitinase/transglycosylase that plays a role in cell wall architecture. Chitinase and transglycosylase activities are coupled. Required for the polysaccharide cross-linking at the septa and the cell wall. More specifically, transfers chitin to 1,6-beta-glucan in the cell wall. In Arthroderma benhamiae (strain ATCC MYA-4681 / CBS 112371) (Trichophyton mentagrophytes), this protein is Crh-like protein ARB_05253.